Consider the following 476-residue polypeptide: Angiotensinogen (476 aa).

Positions 1 to 24 (MAPAGVSLRATILCLVAWAGLAAG) are cleaved as a signal peptide. N-linked (GlcNAc...) asparagine glycosylation is found at asparagine 38, asparagine 161, asparagine 295, and asparagine 319. A disulfide bridge links cysteine 42 with cysteine 162.

Belongs to the serpin family. Post-translationally, in response to low blood pressure, the enzyme renin/REN cleaves angiotensinogen to produce angiotensin-1. Angiotensin-1 is a substrate of ACE (angiotensin converting enzyme) that removes a dipeptide to yield the physiologically active peptide angiotensin-2. Angiotensin-1 and angiotensin-2 can be further processed to generate angiotensin-3, angiotensin-4. Angiotensin 1-9 is cleaved from angiotensin-1 by ACE2 and can be further processed by ACE to produce angiotensin 1-7, angiotensin 1-5 and angiotensin 1-4. Angiotensin 1-7 has also been proposed to be cleaved from angiotensin-2 by ACE2 or from angiotensin-1 by MME (neprilysin). In terms of processing, the disulfide bond is labile. Angiotensinogen is present in the circulation in a near 40:60 ratio with the oxidized disulfide-bonded form, which preferentially interacts with receptor-bound renin.

The protein resides in the secreted. Essential component of the renin-angiotensin system (RAS), a potent regulator of blood pressure, body fluid and electrolyte homeostasis. Functionally, acts directly on vascular smooth muscle as a potent vasoconstrictor, affects cardiac contractility and heart rate through its action on the sympathetic nervous system, and alters renal sodium and water absorption through its ability to stimulate the zona glomerulosa cells of the adrenal cortex to synthesize and secrete aldosterone. Acts by binding to angiotensin receptors AGTR1 and AGTR2. Also binds the DEAR/FBXW7-AS1 receptor. Its function is as follows. Stimulates aldosterone release. In terms of biological role, is a ligand for the G-protein coupled receptor MAS1. Has vasodilator and antidiuretic effects. Has an antithrombotic effect that involves MAS1-mediated release of nitric oxide from platelets. In Pan troglodytes (Chimpanzee), this protein is Angiotensinogen (AGT).